The primary structure comprises 456 residues: 3-isopropylmalate dehydratase large subunit (456 aa).

The [4Fe-4S] cluster site is built by Cys-336, Cys-396, and Cys-399.

Belongs to the aconitase/IPM isomerase family. LeuC type 1 subfamily. As to quaternary structure, heterodimer of LeuC and LeuD. [4Fe-4S] cluster is required as a cofactor.

The catalysed reaction is (2R,3S)-3-isopropylmalate = (2S)-2-isopropylmalate. The protein operates within amino-acid biosynthesis; L-leucine biosynthesis; L-leucine from 3-methyl-2-oxobutanoate: step 2/4. Functionally, catalyzes the isomerization between 2-isopropylmalate and 3-isopropylmalate, via the formation of 2-isopropylmaleate. The chain is 3-isopropylmalate dehydratase large subunit from Staphylococcus aureus (strain MW2).